The sequence spans 713 residues: Polyribonucleotide nucleotidyltransferase (713 aa).

Mg(2+) is bound by residues Asp488 and Asp494. A KH domain is found at Pro555 to Ile614. The S1 motif domain occupies Gly624–Lys692.

Belongs to the polyribonucleotide nucleotidyltransferase family. Mg(2+) is required as a cofactor.

Its subcellular location is the cytoplasm. It carries out the reaction RNA(n+1) + phosphate = RNA(n) + a ribonucleoside 5'-diphosphate. Its function is as follows. Involved in mRNA degradation. Catalyzes the phosphorolysis of single-stranded polyribonucleotides processively in the 3'- to 5'-direction. This Brucella anthropi (strain ATCC 49188 / DSM 6882 / CCUG 24695 / JCM 21032 / LMG 3331 / NBRC 15819 / NCTC 12168 / Alc 37) (Ochrobactrum anthropi) protein is Polyribonucleotide nucleotidyltransferase.